The sequence spans 336 residues: Potassium channel subfamily K member 1 (336 aa).

The Cytoplasmic segment spans residues 1–20; sequence MLQSLAGSSCVRLVERHRSA. A helical transmembrane segment spans residues 21 to 41; sequence WCFGFLVLGYLLYLVFGAVVF. Residues 42 to 103 are Extracellular-facing; it reads SSVELPYEDL…SNASGNWNWD (62 aa). Asparagine 95 is a glycosylation site (N-linked (GlcNAc...) asparagine). The segment at residues 104 to 116 is an intramembrane region (helical); that stretch reads FTSALFFASTVLS. The stretch at 117-122 is an intramembrane region; that stretch reads TTGYGH. A selectivity filter 1 region spans residues 117-122; sequence TTGYGH. At 123–132 the chain is on the extracellular side; sequence TVPLSDGGKA. The helical transmembrane segment at 133-156 threads the bilayer; that stretch reads FCIIYSVIGIPFTLLFLTAVVQRV. The Cytoplasmic segment spans residues 157–181; that stretch reads TVHVTRRPVLYFHIRWGFSKQVVAI. The helical transmembrane segment at 182 to 202 threads the bilayer; the sequence is VHAVLLGFVTVSCFFFIPAAV. Over 203–211 the chain is Extracellular; it reads FSVLEDDWN. The segment at residues 212–224 is an intramembrane region (helical); sequence FLESFYFCFISLS. Residues 225–230 are selectivity filter 2; that stretch reads TIGLGD. An intramembrane segment occupies 225–231; sequence TIGLGDY. Residues 232–243 lie on the Extracellular side of the membrane; the sequence is VPGEGYNQKFRE. The chain crosses the membrane as a helical span at residues 244 to 267; that stretch reads LYKIGITCYLLLGLIAMLVVLETF. Topologically, residues 268-336 are cytoplasmic; sequence CELHELKKFR…PPYEDGSADH (69 aa). A Glycyl lysine isopeptide (Lys-Gly) (interchain with G-Cter in SUMO) cross-link involves residue lysine 274. Residues 293-299 form an important for intracellular retention in recycling endosomes region; sequence IMEHDQL. The interval 310–336 is disordered; that stretch reads GLKEEQKQSEPFVASQSPPYEDGSADH. Position 326 is a phosphoserine (serine 326).

Belongs to the two pore domain potassium channel (TC 1.A.1.8) family. As to quaternary structure, homodimer; disulfide-linked. Heterodimer with KCNK2; disulfide-linked. In astrocytes, forms mostly heterodimeric potassium channels with KCNK2, with only a minor proportion of functional channels containing homodimeric KCNK1. Interacts with KCNK3 and KCNK9, forming functional heterodimeric channels. Interacts with GNG4. Identified in a complex with PSD and ARF6; interacts only with PSD that is bound to ARF6. Interacts with UBE2I. Sumoylation is controversial. Sumoylated by UBE2I. Not sumoylated when expressed in xenopus oocytes or mammalian cells. Sumoylation inactivates the channel, but does not interfere with expression at the cell membrane. Sumoylation of a single subunit is sufficient to silence the dimeric channel. Sumoylation of KCNK1 is sufficient to silence heterodimeric channels formed by KCNK1 and KCNK3 or KCNK9. Desumoylated by SENP1; this activates the channel. Desumoylated by SENP1; this strongly increases halothane-mediated activation of heterodimeric channels formed with KCNK9. SENP1 treatment has no effect. Detected in spiral ganglion neurons. Detected in hippocampus CA1 and CA1 regions and in the molecular layer of the dentate gyrus. Detected on hippocampus astrocytes. Highly expressed in the stria vascularis in the cochlea. Detected in pancreas islet beta cells. Detected in kidney, at brush border membranes in proximal tubules and in cytoplasmic structures in distal convoluted tubules, thick ascending limbs and collecting ducts (at protein level). Widely expressed. Detected in spiral ganglion cells. Highest expression in brain, kidney, thyroid, salivary gland, adrenal gland, prostate, epididymis, uterus, placenta, colon and jejunum. Moderate expression in eyes, pituitary, pancreas, smooth muscle, testis and ovary. Very low levels in lung, aorta, liver, heart, skeletal muscle, thymus and spleen. In the brain, highest expression in cerebellar granule cells, brainstem, hippocampus and cerebral cortex.

Its subcellular location is the cell membrane. The protein localises to the recycling endosome. It localises to the apical cell membrane. It is found in the cytoplasmic vesicle. The protein resides in the perikaryon. Its subcellular location is the cell projection. The protein localises to the dendrite. It localises to the synaptic cell membrane. The enzyme catalyses K(+)(in) = K(+)(out). The catalysed reaction is NH4(+)(in) = NH4(+)(out). It carries out the reaction Na(+)(in) = Na(+)(out). It catalyses the reaction Rb(+)(in) = Rb(+)(out). The enzyme catalyses Cs(+)(in) = Cs(+)(out). The catalysed reaction is Li(+)(in) = Li(+)(out). It carries out the reaction L-glutamate(out) = L-glutamate(in). It catalyses the reaction chloride(in) = chloride(out). Its activity is regulated as follows. Inhibited by quinine, quinidine, barium, and internal acidification. In terms of biological role, ion channel that contributes to passive transmembrane potassium transport and to the regulation of the resting membrane potential in brain astrocytes, but also in kidney and in other tissues. Forms dimeric channels through which potassium ions pass in accordance with their electrochemical gradient. The channel is selective for K(+) ions at physiological potassium concentrations and at neutral pH, but becomes permeable to Na(+) at subphysiological K(+) levels and upon acidification of the extracellular medium. The homodimer has very low potassium channel activity, when expressed in heterologous systems, and can function as weakly inward rectifying potassium channel. Channel activity is modulated by activation of serotonin receptors. Heterodimeric channels containing KCNK1 and KCNK2 have much higher activity, and may represent the predominant form in astrocytes. Heterodimeric channels containing KCNK1 and KCNK3 or KCNK9 have much higher activity. Heterodimeric channels formed by KCNK1 and KCNK9 may contribute to halothane-sensitive currents. Mediates outward rectifying potassium currents in dentate gyrus granule cells and contributes to the regulation of their resting membrane potential. Contributes to the regulation of action potential firing in dentate gyrus granule cells and down-regulates their intrinsic excitability. In astrocytes, the heterodimer formed by KCNK1 and KCNK2 is required for rapid glutamate release in response to activation of G-protein coupled receptors, such as F2R and CNR1. Required for normal ion and water transport in the kidney. Contributes to the regulation of the resting membrane potential of pancreatic beta cells. The low channel activity of homodimeric KCNK1 may be due to sumoylation. The low channel activity may be due to rapid internalization from the cell membrane and retention in recycling endosomes. Permeable to monovalent cations with ion selectivity for K(+) &gt; Rb(+) &gt;&gt; NH4(+) &gt;&gt; Cs(+) = Na(+) = Li(+). The polypeptide is Potassium channel subfamily K member 1 (Kcnk1) (Mus musculus (Mouse)).